The chain runs to 235 residues: Small ribosomal subunit protein eS4 (235 aa).

Residues Leu37 to Glu100 form the S4 RNA-binding domain.

Belongs to the eukaryotic ribosomal protein eS4 family.

In Methanosarcina acetivorans (strain ATCC 35395 / DSM 2834 / JCM 12185 / C2A), this protein is Small ribosomal subunit protein eS4.